The primary structure comprises 235 residues: 2,3-bisphosphoglycerate-dependent phosphoglycerate mutase (235 aa).

Substrate is bound by residues 8 to 15, 21 to 22, Arg-58, 110 to 113, Lys-121, 137 to 138, and 181 to 182; these read RHGESIWN, TG, ERYY, RR, and GN. His-9 serves as the catalytic Tele-phosphohistidine intermediate. Residue Glu-110 is the Proton donor/acceptor of the active site.

The protein belongs to the phosphoglycerate mutase family. BPG-dependent PGAM subfamily.

The catalysed reaction is (2R)-2-phosphoglycerate = (2R)-3-phosphoglycerate. The protein operates within carbohydrate degradation; glycolysis; pyruvate from D-glyceraldehyde 3-phosphate: step 3/5. Catalyzes the interconversion of 2-phosphoglycerate and 3-phosphoglycerate. The polypeptide is 2,3-bisphosphoglycerate-dependent phosphoglycerate mutase (Methanococcus vannielii (strain ATCC 35089 / DSM 1224 / JCM 13029 / OCM 148 / SB)).